The following is a 515-amino-acid chain: NADH-ubiquinone oxidoreductase chain 2 (515 aa).

Helical transmembrane passes span 63–83 (WPIG…NSGS), 250–270 (VFIY…CSIA), 299–319 (FVLV…GLFI), 356–376 (AITF…AGFC), and 379–399 (FYLF…VGVV).

The protein belongs to the complex I subunit 2 family.

It is found in the mitochondrion inner membrane. The enzyme catalyses a ubiquinone + NADH + 5 H(+)(in) = a ubiquinol + NAD(+) + 4 H(+)(out). In terms of biological role, core subunit of the mitochondrial membrane respiratory chain NADH dehydrogenase (Complex I) that is believed to belong to the minimal assembly required for catalysis. Complex I functions in the transfer of electrons from NADH to the respiratory chain. The immediate electron acceptor for the enzyme is believed to be ubiquinone. In Beta vulgaris (Sugar beet), this protein is NADH-ubiquinone oxidoreductase chain 2 (ND2).